The primary structure comprises 183 residues: Guanylate kinase (183 aa).

Residues 4–182 form the Guanylate kinase-like domain; that stretch reads GRVVVLTGPS…AITALEAAIF (179 aa). 11 to 18 lines the ATP pocket; it reads GPSGVGKG.

Belongs to the guanylate kinase family.

It localises to the cytoplasm. The catalysed reaction is GMP + ATP = GDP + ADP. It catalyses the reaction dZMP + ATP = dZDP + ADP. Its pathway is purine metabolism. In terms of biological role, essential for recycling GMP and indirectly, cGMP. Functionally, (Microbial infection) Catalyzes the phosphorylation of dZMP to dZDP, when the bacterium is infected by a phage that produces the substrate for the synthesis of dZTP (2- amino-2'-deoxyadenosine 5'-triphosphate), which is then used by the phage as a DNA polymerase substrate. In Synechococcus elongatus (strain ATCC 33912 / PCC 7942 / FACHB-805) (Anacystis nidulans R2), this protein is Guanylate kinase.